A 279-amino-acid polypeptide reads, in one-letter code: Gas vesicle protein L2 (279 aa).

Belongs to the gas vesicle GvpF/GvpL family. GvpF to GvpM interact with each other in vitro, and may form multi-subunit complex(es). Interacts with GvpC, GvpN and GvpO.

Its subcellular location is the gas vesicle. Its function is as follows. Proteins GvpF to GvpM might be involved in nucleating gas vesicle formation. A minor component of the gas vesicle. Gas vesicles are hollow, gas filled proteinaceous nanostructures found in several microbial planktonic microorganisms. They allow positioning of halobacteria at the optimal depth for growth in the poorly aerated, shallow brine pools of their habitat. Functionally, expression of 2 c-vac DNA fragments containing 2 divergently transcribed regions (gvpE-gvpF-gvpG-gvpH-gvpI-gvpJ-gvpK-gvpL-gvpM and gvpA-gvpC-gvpN-gvpO) allows H.volcanii to produce gas vesicles. The chain is Gas vesicle protein L2 from Halobacterium salinarum (strain ATCC 700922 / JCM 11081 / NRC-1) (Halobacterium halobium).